Reading from the N-terminus, the 303-residue chain is Coenzyme PQQ synthesis protein B (303 aa).

The protein belongs to the PqqB family.

Its pathway is cofactor biosynthesis; pyrroloquinoline quinone biosynthesis. May be involved in the transport of PQQ or its precursor to the periplasm. The protein is Coenzyme PQQ synthesis protein B of Pseudomonas syringae pv. syringae (strain B728a).